The chain runs to 345 residues: Putative RING-H2 finger protein ATL36 (345 aa).

An N-terminal signal peptide occupies residues 1–31 (MNIFTRYHLPRVVSGVILPLFLFHLLPYVTC). Residues 50 to 70 (SIIAIVVLAIFISLGMVSCCL) traverse the membrane as a helical segment. The segment at 123 to 165 (CAICLSEFEDQETLRWMPPCSHTFHANCIDVWLSSWSTCPVCR) adopts an RING-type; atypical zinc-finger fold. S264 carries the post-translational modification Phosphoserine.

Belongs to the RING-type zinc finger family. ATL subfamily.

The protein resides in the membrane. It catalyses the reaction S-ubiquitinyl-[E2 ubiquitin-conjugating enzyme]-L-cysteine + [acceptor protein]-L-lysine = [E2 ubiquitin-conjugating enzyme]-L-cysteine + N(6)-ubiquitinyl-[acceptor protein]-L-lysine.. Its pathway is protein modification; protein ubiquitination. The polypeptide is Putative RING-H2 finger protein ATL36 (ATL36) (Arabidopsis thaliana (Mouse-ear cress)).